A 165-amino-acid chain; its full sequence is 16S rRNA aminocarboxypropyltransferase (165 aa).

S-adenosyl-L-methionine contacts are provided by Thr-17, Leu-62, Leu-83, and Thr-102.

The protein belongs to the TDD superfamily. TSR3 family.

It localises to the cytoplasm. It carries out the reaction an N(1)-methylpseudouridine in rRNA + S-adenosyl-L-methionine = N(1)-methyl-N(3)-[(3S)-3-amino-3-carboxypropyl]pseudouridine in rRNA + S-methyl-5'-thioadenosine + H(+). Aminocarboxypropyltransferase that catalyzes the aminocarboxypropyl transfer on pseudouridine corresponding to position 914 in M.jannaschii 16S rRNA. It constitutes the last step in biosynthesis of the hypermodified N1-methyl-N3-(3-amino-3-carboxypropyl) pseudouridine (m1acp3-Psi). The polypeptide is 16S rRNA aminocarboxypropyltransferase (Halobacterium salinarum (strain ATCC 700922 / JCM 11081 / NRC-1) (Halobacterium halobium)).